Here is a 348-residue protein sequence, read N- to C-terminus: tRNA-specific 2-thiouridylase MnmA (348 aa).

Residues 8 to 15 and Met-34 contribute to the ATP site; that span reads LLSGGVDS. Cys-105 acts as the Nucleophile in catalysis. A disulfide bridge connects residues Cys-105 and Cys-197. Gly-129 contributes to the ATP binding site. The interaction with tRNA stretch occupies residues 147 to 149; sequence KDQ. The active-site Cysteine persulfide intermediate is Cys-197.

It belongs to the MnmA/TRMU family.

The protein localises to the cytoplasm. It carries out the reaction S-sulfanyl-L-cysteinyl-[protein] + uridine(34) in tRNA + AH2 + ATP = 2-thiouridine(34) in tRNA + L-cysteinyl-[protein] + A + AMP + diphosphate + H(+). Functionally, catalyzes the 2-thiolation of uridine at the wobble position (U34) of tRNA, leading to the formation of s(2)U34. The polypeptide is tRNA-specific 2-thiouridylase MnmA (Fervidobacterium nodosum (strain ATCC 35602 / DSM 5306 / Rt17-B1)).